We begin with the raw amino-acid sequence, 135 residues long: MSEYWYPILGGILLGLSTVMLLLLNGRIAGISGIVGRLLQGGNPAQDIPFVVGLVLGPLVFSVIFDRFPSVTVAATWPTIIVAGLLVGLGTRMSAGCTSGHGIAGIARHSPRSIVATAIFLISGMATATFMGVYQ.

Transmembrane regions (helical) follow at residues 4–24 (YWYP…LLLL), 45–65 (AQDI…SVIF), 71–91 (VTVA…GLGT), and 114–134 (IVAT…MGVY).

Belongs to the TsuA/YedE (TC 9.B.102) family.

The protein localises to the cell inner membrane. This chain is Probable transporter XF_0766, found in Xylella fastidiosa (strain 9a5c).